The following is a 296-amino-acid chain: MNRQSGVNAGVQNNPPSRVVYLGSIPYDQTEEQILDLCSNVGPVINLKMMFDPQTGRSKGYAFIEFRDLESSASAVRNLNGYQLGSRFLKCGYSSNSDISGVSQQQQQQYNNINGNNNNNGNNNNNSNGPDFQNSGNANFLSQKFPELPSGIDVNINMTTPAMMISSELAKKPKEVQLKFLQKFQEWTRAHPEDAVSLLELCPQLSFVTAELLLTNGICKVDDLIPLASRPQEEASATNNNSVNEVVDPAVLNKQKELLKQVLQLNDSQISILPDDERMAIWDLKQKALRGEFGAF.

Residues arginine 18 to asparagine 96 enclose the RRM domain. The tract at residues isoleucine 99–phenylalanine 140 is disordered. The span at serine 100–serine 135 shows a compositional bias: low complexity.

In terms of assembly, component of the CFIA complex, which is composed of RNA14, RNA15, PCF11 and CLP1. Interacts directly with RNA14. Interacts with polyadenylate-binding protein PAB1.

It is found in the nucleus. In terms of biological role, RNA-binding component of the cleavage factor IA (CFIA) complex, which is involved in the endonucleolytic cleavage during polyadenylation-dependent pre-mRNA 3'-end formation and cooperates with the cleavage factor NAB4/CFIB and the cleavage and polyadenylation factor (CPF) complex. Binds to A-rich RNA sequence elements. In Saccharomyces cerevisiae (strain ATCC 204508 / S288c) (Baker's yeast), this protein is mRNA 3'-end-processing protein RNA15 (RNA15).